A 147-amino-acid chain; its full sequence is Cytochrome b-c1 complex subunit 6, mitochondrial (147 aa).

The interval 25–89 (AEDDDNEQHE…DLREHFKNTE (65 aa)) is disordered. Residues 41 to 78 (EEKEEENGDEDEDEDEDEDDDDDDDEDEEEEEEVTDQL) show a composition bias toward acidic residues. Residues 79-89 (EDLREHFKNTE) are compositionally biased toward basic and acidic residues. A disulfide bond links Cys101 and Cys123.

Belongs to the UQCRH/QCR6 family. Component of the ubiquinol-cytochrome c oxidoreductase (cytochrome b-c1 complex, complex III, CIII), a multisubunit enzyme composed of 10 subunits. The complex is composed of 3 respiratory subunits cytochrome b (COB), cytochrome c1 (CYT1) and Rieske protein (RIP1), 2 core protein subunits COR1 and QCR2, and 5 low-molecular weight protein subunits QCR6, QCR7, QCR8, QCR9 and QCR10. The complex exists as an obligatory dimer and forms supercomplexes (SCs) in the inner mitochondrial membrane with a monomer or a dimer of cytochrome c oxidase (complex IV, CIV), resulting in 2 different assemblies (supercomplexes III(2)IV and III(2)IV(2)). QCR6 interacts with COX5A at the CIII-CIV interface.

It is found in the mitochondrion inner membrane. In terms of biological role, component of the ubiquinol-cytochrome c oxidoreductase, a multisubunit transmembrane complex that is part of the mitochondrial electron transport chain which drives oxidative phosphorylation. The respiratory chain contains 3 multisubunit complexes succinate dehydrogenase (complex II, CII), ubiquinol-cytochrome c oxidoreductase (cytochrome b-c1 complex, complex III, CIII) and cytochrome c oxidase (complex IV, CIV), that cooperate to transfer electrons derived from NADH and succinate to molecular oxygen, creating an electrochemical gradient over the inner membrane that drives transmembrane transport and the ATP synthase. The cytochrome b-c1 complex catalyzes electron transfer from ubiquinol to cytochrome c, linking this redox reaction to translocation of protons across the mitochondrial inner membrane, with protons being carried across the membrane as hydrogens on the quinol. In the process called Q cycle, 2 protons are consumed from the matrix, 4 protons are released into the intermembrane space and 2 electrons are passed to cytochrome c. The sequence is that of Cytochrome b-c1 complex subunit 6, mitochondrial (QCR6) from Saccharomyces cerevisiae (strain ATCC 204508 / S288c) (Baker's yeast).